Here is a 397-residue protein sequence, read N- to C-terminus: 1-deoxy-D-xylulose 5-phosphate reductoisomerase (397 aa).

Thr-12, Gly-13, Ser-14, Ile-15, Gly-38, Lys-39, Asn-40, and Asn-126 together coordinate NADPH. Residue Lys-127 participates in 1-deoxy-D-xylulose 5-phosphate binding. Glu-128 serves as a coordination point for NADPH. Asp-152 is a binding site for Mn(2+). 1-deoxy-D-xylulose 5-phosphate is bound by residues Ser-153, Glu-154, Ser-188, and His-211. Glu-154 is a Mn(2+) binding site. Gly-217 provides a ligand contact to NADPH. 1-deoxy-D-xylulose 5-phosphate contacts are provided by Ser-224, Asn-229, Lys-230, and Glu-233. Glu-233 is a Mn(2+) binding site.

Belongs to the DXR family. Mg(2+) is required as a cofactor. Mn(2+) serves as cofactor.

The catalysed reaction is 2-C-methyl-D-erythritol 4-phosphate + NADP(+) = 1-deoxy-D-xylulose 5-phosphate + NADPH + H(+). It participates in isoprenoid biosynthesis; isopentenyl diphosphate biosynthesis via DXP pathway; isopentenyl diphosphate from 1-deoxy-D-xylulose 5-phosphate: step 1/6. In terms of biological role, catalyzes the NADPH-dependent rearrangement and reduction of 1-deoxy-D-xylulose-5-phosphate (DXP) to 2-C-methyl-D-erythritol 4-phosphate (MEP). The polypeptide is 1-deoxy-D-xylulose 5-phosphate reductoisomerase (Haemophilus influenzae (strain ATCC 51907 / DSM 11121 / KW20 / Rd)).